A 195-amino-acid chain; its full sequence is Heavy metal-associated isoprenylated plant protein 18 (195 aa).

Disordered regions lie at residues 36–76 and 145–172; these read DVVQ…KPET and EKEK…NPSS. Basic and acidic residues-rich tracts occupy residues 47-76 and 145-157; these read TVTK…KPET and EKEK…ITKD. The 72-residue stretch at 78-149 folds into the HMA domain; it reads TRKLEIHIAF…RIVKMEKEKK (72 aa). At cysteine 192 the chain carries Cysteine methyl ester. Cysteine 192 is lipidated: S-farnesyl cysteine. Positions 193 to 195 are cleaved as a propeptide — removed in mature form; sequence SIS.

It belongs to the HIPP family.

In terms of biological role, probable heavy-metal-binding protein. Required for female gametophyte development and function. The chain is Heavy metal-associated isoprenylated plant protein 18 from Arabidopsis thaliana (Mouse-ear cress).